A 122-amino-acid chain; its full sequence is Serum amyloid A-2 protein (122 aa).

Positions 1 to 18 are cleaved as a signal peptide; it reads MKLLSGLLLCSLVLGVSG. Pyrrolidone carboxylic acid is present on glutamine 19. The disordered stretch occupies residues 90–122; the sequence is GAEDSMADQAANEWGRSGKDPNHFRPKGLPDKY. A compositionally biased stretch (basic and acidic residues) spans 105-122; it reads RSGKDPNHFRPKGLPDKY.

It belongs to the SAA family. In terms of assembly, apolipoprotein of the HDL complex. As to expression, expressed by the liver; secreted in plasma.

The protein localises to the secreted. In terms of biological role, major acute phase reactant. This is Serum amyloid A-2 protein (SAA2) from Oryctolagus cuniculus (Rabbit).